The following is a 459-amino-acid chain: Exodeoxyribonuclease 7 large subunit (459 aa).

Belongs to the XseA family. As to quaternary structure, heterooligomer composed of large and small subunits.

The protein resides in the cytoplasm. The catalysed reaction is Exonucleolytic cleavage in either 5'- to 3'- or 3'- to 5'-direction to yield nucleoside 5'-phosphates.. Its function is as follows. Bidirectionally degrades single-stranded DNA into large acid-insoluble oligonucleotides, which are then degraded further into small acid-soluble oligonucleotides. The sequence is that of Exodeoxyribonuclease 7 large subunit from Pseudomonas aeruginosa (strain LESB58).